The sequence spans 535 residues: Cytochrome P450 monooxygenase claQ (535 aa).

A run of 2 helical transmembrane segments spans residues 7-27 and 225-245; these read IGTW…KLVG and YFAI…NLPT. Cys-472 contacts heme.

It belongs to the cytochrome P450 family. Requires heme as cofactor.

The protein localises to the membrane. It functions in the pathway secondary metabolite biosynthesis; terpenoid biosynthesis. Cytochrome P450 monooxygenase; part of the gene cluster that mediates the biosynthesis of clavilactone A, a meroterpenoid that features a unique benzo-fused ten-membered carbocyclic ring unit with an alpha,beta-epoxy-gamma-lactone moiety, forming an intriguing 10/5/3 tricyclic nested skeleton. Cytochrome P450 monooxygenases claO, claP, claQ, claU, and claW are close orthologs, suggesting that a redundant function or pseudogenes are present in the cla cluster. These monoxygenases are not involved in clavilactone A biosynthesis nor its modification. ClaR, ClaS and ClaT are sufficient to produce clavilactone A. The biosynthesis begins with the prenyltransferase claS that transfers geranyl pyrophosphate (GPP) to hydroquinone to produces geranylhydroquinone. The cytochrome P450 monooxygenase claR then catalyzes the diradical coupling reaction between the intramolecular hydroquinone and allyl moieties to form the benzo-fused ten-membered carbocyclic ring unit of wigantol. Finally the cytochrome P450 monooxygenase claT exquisitely and stereoselectively assembles the alpha,beta-epoxy-gamma-lactone moiety, producing clavilactone A via arnebinol A. This Ampulloclitocybe clavipes (Club foot) protein is Cytochrome P450 monooxygenase claQ.